The chain runs to 808 residues: MNKTIIINNVSKYIKFKNYYSSSSTILKKKTSEIYKIKGLDIKDRKELYSLNNDSIKKKLNQLKDETNQLLKERGEELMKDLSKTLNLTSDNLKYNITKSPFTLRAYLLAANQGISFYHHELRKQINPTDDYERQKRKDLVYKLQSQEIDSLTSGGANKKKSPFLEDNNNKKSMSIEREMEIIREQQQEQQHFDQQMSNSTKWEMSQLEIQPRIDTFRQDELFVSFNPYESMSTNSQSYQLVSRLSKFVWNKELTNWEMFSSSKLNQLIPQLQLHILDKINLNNDNDNDNSIIINQFLESIKFISNEINSTDLNIFKTLNSSNNNNNSSENIIEVENGGDFKKIINNSIVDSLIYMKGHHFRITSDPFILFFQQLKENQDYFTSNEDYKQFLEKLLDTLLFETIEFDPTSTTTINGNRQFEYKLKLDLLQREAFRQFKVYQVFNTSPDAKRHEESDLRKLAHLCKTLQKRSTSDFIQESKKYLSPQILSNGLLNSNKLLVATSSSNELNQSKTSISISQLTDGLHSCIPATMSLLEFSIKNSSKDNILFDTFDGKLKNINSLDDLITKFANSKYIYLRESLSQRFSMFIQSSNNTTDNNTTTDTNDNDIIIGLNNPIYKLLIDLEDKVLELSQNNFEENPIENWIGCLSIELGDEDDNIEYKDTDQFNVIASQNFNLVRINNQMLAQLHKTFSEDLDFQIEELELMIKNKKILEREIKAHNEKISKIIKDSRDSTTPTFYFIGIQDDQVYTLEIPNEWEPVWNLLKSYPNGLLLKDFIDKQTFVTKEAFLSTLTDLNKYGVVGLFPKN.

Residues 43-78 (KDRKELYSLNNDSIKKKLNQLKDETNQLLKERGEEL) adopt a coiled-coil conformation. Residues 152–171 (LTSGGANKKKSPFLEDNNNK) form a disordered region. Positions 694 to 733 (EDLDFQIEELELMIKNKKILEREIKAHNEKISKIIKDSRD) form a coiled coil.

The protein localises to the mitochondrion. Required for efficient chemotaxis. This chain is Protein tortoise (torA), found in Dictyostelium discoideum (Social amoeba).